The primary structure comprises 109 residues: Cell division suppressor protein YneA (109 aa).

The LysM domain maps to 39-90 (SEVNVSEGDSLWALADQYAGKSDMAKADFVSWVEKENNLADGHVEAGDSVVI).

Belongs to the YneA family.

The protein resides in the cytoplasm. Its function is as follows. Inhibits cell division during the SOS response. Affects a later stage of the cell division protein assembly, after the assembly of the Z ring, by probably suppressing recruitment of FtsL and/or DivIC to the division machinery. The chain is Cell division suppressor protein YneA from Listeria monocytogenes serotype 4b (strain CLIP80459).